The primary structure comprises 504 residues: Glycerol kinase (504 aa).

Threonine 12 contributes to the ADP binding site. ATP-binding residues include threonine 12, threonine 13, and serine 14. Position 12 (threonine 12) interacts with sn-glycerol 3-phosphate. Position 16 (arginine 16) interacts with ADP. Residues arginine 82, glutamate 83, tyrosine 134, and aspartate 249 each coordinate sn-glycerol 3-phosphate. Residues arginine 82, glutamate 83, tyrosine 134, aspartate 249, and glutamine 250 each coordinate glycerol. Threonine 271 and glycine 315 together coordinate ADP. Residues threonine 271, glycine 315, glutamine 319, and glycine 416 each contribute to the ATP site. ADP contacts are provided by glycine 416 and asparagine 420.

Belongs to the FGGY kinase family.

The enzyme catalyses glycerol + ATP = sn-glycerol 3-phosphate + ADP + H(+). It participates in polyol metabolism; glycerol degradation via glycerol kinase pathway; sn-glycerol 3-phosphate from glycerol: step 1/1. With respect to regulation, inhibited by fructose 1,6-bisphosphate (FBP). Functionally, key enzyme in the regulation of glycerol uptake and metabolism. Catalyzes the phosphorylation of glycerol to yield sn-glycerol 3-phosphate. The protein is Glycerol kinase of Mycobacteroides abscessus (strain ATCC 19977 / DSM 44196 / CCUG 20993 / CIP 104536 / JCM 13569 / NCTC 13031 / TMC 1543 / L948) (Mycobacterium abscessus).